Here is a 316-residue protein sequence, read N- to C-terminus: Methionyl-tRNA formyltransferase (316 aa).

109–112 (SLLP) serves as a coordination point for (6S)-5,6,7,8-tetrahydrofolate.

It belongs to the Fmt family.

The enzyme catalyses L-methionyl-tRNA(fMet) + (6R)-10-formyltetrahydrofolate = N-formyl-L-methionyl-tRNA(fMet) + (6S)-5,6,7,8-tetrahydrofolate + H(+). Its function is as follows. Attaches a formyl group to the free amino group of methionyl-tRNA(fMet). The formyl group appears to play a dual role in the initiator identity of N-formylmethionyl-tRNA by promoting its recognition by IF2 and preventing the misappropriation of this tRNA by the elongation apparatus. The chain is Methionyl-tRNA formyltransferase from Idiomarina loihiensis (strain ATCC BAA-735 / DSM 15497 / L2-TR).